The following is a 406-amino-acid chain: Tyrosine--tRNA ligase (406 aa).

Y35 is a binding site for L-tyrosine. The short motif at A40–H49 is the 'HIGH' region element. 2 residues coordinate L-tyrosine: Y167 and Q171. The 'KMSKS' region motif lies at K227 to S231. K230 is an ATP binding site. Residues I341–V405 form the S4 RNA-binding domain.

The protein belongs to the class-I aminoacyl-tRNA synthetase family. TyrS type 1 subfamily. In terms of assembly, homodimer.

The protein resides in the cytoplasm. The enzyme catalyses tRNA(Tyr) + L-tyrosine + ATP = L-tyrosyl-tRNA(Tyr) + AMP + diphosphate + H(+). Catalyzes the attachment of tyrosine to tRNA(Tyr) in a two-step reaction: tyrosine is first activated by ATP to form Tyr-AMP and then transferred to the acceptor end of tRNA(Tyr). This Borrelia recurrentis (strain A1) protein is Tyrosine--tRNA ligase.